Here is a 247-residue protein sequence, read N- to C-terminus: MNIIHVKNYEEMSQKAAALLFERIQQSPKITLGLATGGTPENTYTALIAKAKENGQSFSHVQTFNLDEYVGLPAEDKNSYRHYMEQRLFDHIDIPKEKTHLPNGMAPSLEEECRAYENMIADAGGIDIQLLGIGSNGHIGFNEPGTPFSSKTHVVELAEETRKANARYFPTLEDVPKQAITMGIQTIMEAKEILLLISGKAKAEAFAKLCSDEVTEAFPASILNKHPNVTVIADEEAASVYTQKAHL.

Residue aspartate 67 is the Proton acceptor; for enolization step of the active site. Asparagine 136 acts as the For ring-opening step in catalysis. Histidine 138 acts as the Proton acceptor; for ring-opening step in catalysis. Glutamate 143 acts as the For ring-opening step in catalysis.

The protein belongs to the glucosamine/galactosamine-6-phosphate isomerase family. NagB subfamily.

It carries out the reaction alpha-D-glucosamine 6-phosphate + H2O = beta-D-fructose 6-phosphate + NH4(+). Its pathway is amino-sugar metabolism; N-acetylneuraminate degradation; D-fructose 6-phosphate from N-acetylneuraminate: step 5/5. Functionally, catalyzes the reversible isomerization-deamination of glucosamine 6-phosphate (GlcN6P) to form fructose 6-phosphate (Fru6P) and ammonium ion. The protein is Glucosamine-6-phosphate deaminase of Shouchella clausii (strain KSM-K16) (Alkalihalobacillus clausii).